The chain runs to 306 residues: Pantothenate kinase (306 aa).

91–98 (GSVAVGKS) contacts ATP.

This sequence belongs to the prokaryotic pantothenate kinase family.

It localises to the cytoplasm. It carries out the reaction (R)-pantothenate + ATP = (R)-4'-phosphopantothenate + ADP + H(+). Its pathway is cofactor biosynthesis; coenzyme A biosynthesis; CoA from (R)-pantothenate: step 1/5. This chain is Pantothenate kinase, found in Streptococcus agalactiae serotype Ia (strain ATCC 27591 / A909 / CDC SS700).